We begin with the raw amino-acid sequence, 315 residues long: Pantothenate kinase (315 aa).

Position 94-101 (94-101 (GSVAVGKS)) interacts with ATP.

The protein belongs to the prokaryotic pantothenate kinase family.

The protein localises to the cytoplasm. It carries out the reaction (R)-pantothenate + ATP = (R)-4'-phosphopantothenate + ADP + H(+). It participates in cofactor biosynthesis; coenzyme A biosynthesis; CoA from (R)-pantothenate: step 1/5. The polypeptide is Pantothenate kinase (Shewanella amazonensis (strain ATCC BAA-1098 / SB2B)).